The primary structure comprises 332 residues: Ketol-acid reductoisomerase (NADP(+)) (332 aa).

The 181-residue stretch at 2 to 182 (AKIYHDLEVS…GATRAGVLET (181 aa)) folds into the KARI N-terminal Rossmann domain. Residues 25–28 (YGSQ), arginine 48, serine 53, and 83–86 (DTEQ) each bind NADP(+). Histidine 108 is an active-site residue. Position 134 (glycine 134) interacts with NADP(+). Residues 183 to 328 (TFKEETETDL…KVIREMMPWL (146 aa)) form the KARI C-terminal knotted domain. Mg(2+)-binding residues include aspartate 191, glutamate 195, glutamate 227, and glutamate 231. Substrate is bound at residue serine 252.

Belongs to the ketol-acid reductoisomerase family. Mg(2+) serves as cofactor.

It carries out the reaction (2R)-2,3-dihydroxy-3-methylbutanoate + NADP(+) = (2S)-2-acetolactate + NADPH + H(+). The enzyme catalyses (2R,3R)-2,3-dihydroxy-3-methylpentanoate + NADP(+) = (S)-2-ethyl-2-hydroxy-3-oxobutanoate + NADPH + H(+). It functions in the pathway amino-acid biosynthesis; L-isoleucine biosynthesis; L-isoleucine from 2-oxobutanoate: step 2/4. It participates in amino-acid biosynthesis; L-valine biosynthesis; L-valine from pyruvate: step 2/4. In terms of biological role, involved in the biosynthesis of branched-chain amino acids (BCAA). Catalyzes an alkyl-migration followed by a ketol-acid reduction of (S)-2-acetolactate (S2AL) to yield (R)-2,3-dihydroxy-isovalerate. In the isomerase reaction, S2AL is rearranged via a Mg-dependent methyl migration to produce 3-hydroxy-3-methyl-2-ketobutyrate (HMKB). In the reductase reaction, this 2-ketoacid undergoes a metal-dependent reduction by NADPH to yield (R)-2,3-dihydroxy-isovalerate. This chain is Ketol-acid reductoisomerase (NADP(+)), found in Dictyoglomus thermophilum (strain ATCC 35947 / DSM 3960 / H-6-12).